The chain runs to 436 residues: UPF0597 protein DP0591 (436 aa).

This sequence belongs to the UPF0597 family.

This is UPF0597 protein DP0591 from Desulfotalea psychrophila (strain LSv54 / DSM 12343).